The chain runs to 285 residues: Ribosomal RNA small subunit methyltransferase I (285 aa).

It belongs to the methyltransferase superfamily. RsmI family.

The protein localises to the cytoplasm. It carries out the reaction cytidine(1402) in 16S rRNA + S-adenosyl-L-methionine = 2'-O-methylcytidine(1402) in 16S rRNA + S-adenosyl-L-homocysteine + H(+). In terms of biological role, catalyzes the 2'-O-methylation of the ribose of cytidine 1402 (C1402) in 16S rRNA. In Mycobacterium tuberculosis (strain CDC 1551 / Oshkosh), this protein is Ribosomal RNA small subunit methyltransferase I.